We begin with the raw amino-acid sequence, 256 residues long: Floral homeotic protein APETALA 1 (256 aa).

Residues M1–P61 form the MADS-box domain. The K-box domain occupies N88–V178. Residues D187–I206 form a disordered region.

In terms of assembly, homodimer capable of binding to CArG-box sequences.

It is found in the nucleus. Functionally, transcription factor that promotes early floral meristem identity in synergy with LEAFY. Displays a redundant function with CAULIFLOWER in the up-regulation of LEAFY. Required subsequently for the transition of an inflorescence meristem into a floral meristem, and for the normal development of sepals and petals in flowers. Regulates positively B class homeotic proteins. The polypeptide is Floral homeotic protein APETALA 1 (AP1) (Brassica oleracea (Wild cabbage)).